The chain runs to 1280 residues: SET and MYND domain-containing protein DDB_G0284059 (1280 aa).

2 disordered regions span residues 1-35 (MTKK…SHNH) and 111-167 (INKI…QKQQ). Composition is skewed to low complexity over residues 16 to 25 (NNNNNNNHGN) and 117 to 153 (ENSP…QSQP). TPR repeat units lie at residues 272–305 (SKGY…YDME) and 383–416 (HKLY…IEKR). A coiled-coil region spans residues 439-468 (QKDEEIEQELDNKNNNSNDDEKQQQQQQQQ). The Zn(2+) site is built by cysteine 533, cysteine 536, cysteine 546, cysteine 549, cysteine 555, cysteine 559, histidine 568, and cysteine 572. An MYND-type zinc finger spans residues 533–572 (CYNCFKEILSPIYCKECSNSQYCSNKCLNEDYVKQHGREC). Disordered stretches follow at residues 601 to 642 (ANKG…QNLN), 659 to 726 (ALSS…TTTT), 854 to 905 (QQQQ…PFSP), and 1039 to 1079 (AKLQ…LNNN). Low complexity-rich tracts occupy residues 659–697 (ALSS…SLTE), 712–726 (SSSS…TTTT), 854–898 (QQQQ…QNPP), 1042–1053 (QQQQQQQQQHQQ), and 1061–1079 (NSNP…LNNN). One can recognise an SET domain in the interval 822–965 (CQLTTYTFAI…KGEEILGCYG (144 aa)). The stretch at 1218–1251 (GREYSKLGQIYLTLGEIEKSEDAIEKAESILMSW) is one TPR 3 repeat.

This sequence belongs to the class V-like SAM-binding methyltransferase superfamily.

Its function is as follows. Probable methyltransferase. This chain is SET and MYND domain-containing protein DDB_G0284059, found in Dictyostelium discoideum (Social amoeba).